The primary structure comprises 251 residues: Flap endonuclease Xni (251 aa).

D104 contacts Mg(2+). A 5'-3' exonuclease domain is found at 160 to 249 (VLPRQLPDYW…IDGNLQQLRL (90 aa)). K(+)-binding residues include L171, A172, P180, V182, and I185. An interaction with DNA region spans residues 184–189 (GIGPKS).

Belongs to the Xni family. Requires Mg(2+) as cofactor. It depends on K(+) as a cofactor.

In terms of biological role, has flap endonuclease activity. During DNA replication, flap endonucleases cleave the 5'-overhanging flap structure that is generated by displacement synthesis when DNA polymerase encounters the 5'-end of a downstream Okazaki fragment. This Salmonella dublin (strain CT_02021853) protein is Flap endonuclease Xni.